A 284-amino-acid polypeptide reads, in one-letter code: UTP--glucose-1-phosphate uridylyltransferase (284 aa).

This sequence belongs to the UDPGP type 2 family.

The catalysed reaction is alpha-D-glucose 1-phosphate + UTP + H(+) = UDP-alpha-D-glucose + diphosphate. The protein is UTP--glucose-1-phosphate uridylyltransferase (celA) of Komagataeibacter xylinus (Gluconacetobacter xylinus).